The following is a 424-amino-acid chain: ATP-dependent RNA helicase WM6 (424 aa).

The span at 1–16 (MADNDDLLDYEDEEQT) shows a compositional bias: acidic residues. A disordered region spans residues 1 to 27 (MADNDDLLDYEDEEQTETTAVENQEAP). The Q motif signature appears at 41-69 (SGFRDFLLKPEILRAIVDCGFEHPSEVQH). Residues 72–246 (IPQAVLGMDI…KKFMQDPMEV (175 aa)) form the Helicase ATP-binding domain. Position 85–92 (85–92 (AKSGMGKT)) interacts with ATP. The short motif at 193 to 196 (DECD) is the DECD box element. The Helicase C-terminal domain occupies 258 to 419 (GLQQHYVNLK…ELPEEIDLST (162 aa)).

Belongs to the DEAD box helicase family. DECD subfamily. Component of the spliceosome. Interacts with the exon junction complex.

The protein resides in the nucleus speckle. The enzyme catalyses ATP + H2O = ADP + phosphate + H(+). Its function is as follows. Required for mRNA export out of the nucleus. Probable RNA helicase that may regulate entry into mitosis by down-regulating the expression of other genes whose activity may be rate-limiting for entry into mitosis during embryogenesis. Binds to salivary gland chromosomes and modifies position effect variegation. Promotes an open chromatin structure that favors transcription during development by regulating the spread of heterochromatin. This Drosophila melanogaster (Fruit fly) protein is ATP-dependent RNA helicase WM6 (Hel25E).